We begin with the raw amino-acid sequence, 246 residues long: Ribonuclease 3 (246 aa).

The RNase III domain occupies 18-147 (FKELQKKIGI…FIGALYLDQG (130 aa)). Glutamate 60 serves as a coordination point for Mg(2+). The active site involves aspartate 64. Mg(2+) contacts are provided by aspartate 133 and glutamate 136. Glutamate 136 is a catalytic residue. The region spanning 173 to 242 (DFKSQLQELV…AQMALQKLKT (70 aa)) is the DRBM domain.

This sequence belongs to the ribonuclease III family. As to quaternary structure, homodimer. Mg(2+) serves as cofactor.

The protein localises to the cytoplasm. It catalyses the reaction Endonucleolytic cleavage to 5'-phosphomonoester.. In terms of biological role, digests double-stranded RNA. Involved in the processing of primary rRNA transcript to yield the immediate precursors to the large and small rRNAs (23S and 16S). Processes some mRNAs, and tRNAs when they are encoded in the rRNA operon. Processes pre-crRNA and tracrRNA of type II CRISPR loci if present in the organism. The polypeptide is Ribonuclease 3 (Geobacillus sp. (strain WCH70)).